Consider the following 658-residue polypeptide: Probable replication factor A 73 kDa subunit (658 aa).

Disordered regions lie at residues 134-155 and 169-222; these read PEVKPRSHSGNPAEHHGYRPNI and SEFQ…TERG. A DNA-binding region (OB) is located at residues 236–326; that stretch reads FRIHGMVSRK…TLRNDSVVEA (91 aa). The C4-type zinc-finger motif lies at 518–539; the sequence is CASEGCQKKVIESDGEYRCEKC.

It belongs to the replication factor A protein 1 family. In terms of assembly, component of the heterotrimeric canonical replication protein A complex (RPA).

Its subcellular location is the nucleus. Functionally, as part of the heterotrimeric replication protein A complex (RPA/RP-A), binds and stabilizes single-stranded DNA intermediates, that form during DNA replication or upon DNA stress. It prevents their reannealing and in parallel, recruits and activates different proteins and complexes involved in DNA metabolism. Thereby, it plays an essential role both in DNA replication and the cellular response to DNA damage. In Caenorhabditis briggsae, this protein is Probable replication factor A 73 kDa subunit.